The following is a 628-amino-acid chain: Methionine--tRNA ligase (628 aa).

The 'HIGH' region signature appears at 9–19; the sequence is YYVNDVPHLGH. Residues C124, C127, C142, and C145 each coordinate Zn(2+). The 'KMSKS' region signature appears at 294–298; that stretch reads KMSKS. Residue K297 coordinates ATP. The tRNA-binding domain maps to 527-628; the sequence is DFAKIEIKVA…QLVQNGSLVG (102 aa).

It belongs to the class-I aminoacyl-tRNA synthetase family. MetG type 2A subfamily. As to quaternary structure, homodimer. The cofactor is Zn(2+).

Its subcellular location is the cytoplasm. The catalysed reaction is tRNA(Met) + L-methionine + ATP = L-methionyl-tRNA(Met) + AMP + diphosphate. Its function is as follows. Is required not only for elongation of protein synthesis but also for the initiation of all mRNA translation through initiator tRNA(fMet) aminoacylation. This is Methionine--tRNA ligase (metG) from Campylobacter jejuni subsp. jejuni serotype O:2 (strain ATCC 700819 / NCTC 11168).